Here is a 423-residue protein sequence, read N- to C-terminus: G protein-activated inward rectifier potassium channel 2 (423 aa).

Residues 1-89 (MAKLTESMTN…IFTTLVDLKW (89 aa)) are Cytoplasmic-facing. 2 positions are modified to phosphoserine: Ser-16 and Ser-23. Residues 90–114 (RFNLLIFVMVYTVTWLFFGMIWWLI) form a helical membrane-spanning segment. Topologically, residues 115-138 (AYIRGDMDHIEDPSWTPCVTNLNG) are extracellular. Positions 139-150 (FVSAFLFSIETE) form an intramembrane region, helical; Pore-forming. The pore-forming intramembrane region spans 151–157 (TTIGYGY). Residues 152-157 (TIGYGY) carry the Selectivity filter motif. Residues 158-166 (RVITDKCPE) are Extracellular-facing. A helical transmembrane segment spans residues 167–188 (GIILLLIQSVLGSIVNAFMVGC). The Cytoplasmic segment spans residues 189–423 (MFVKISQPKK…VANLENESKV (235 aa)). Positions 390–423 (NQHAELETEEEEKNLEEQTERNGDVANLENESKV) are disordered. A PDZ-binding motif is present at residues 420–423 (ESKV).

It belongs to the inward rectifier-type potassium channel (TC 1.A.2.1) family. KCNJ6 subfamily. In terms of assembly, associates with KCNJ3/GIRK1 or KCNJ5/GRIK4 to form a G-protein-activated heteromultimer pore-forming unit. The resulting inward current is much larger. Interacts (via PDZ-binding motif) with SNX27 (via PDZ domain); the interaction is required when endocytosed to prevent degradation in lysosomes and promote recycling to the plasma membrane. Most abundant in cerebellum, and to a lesser degree in islets and exocrine pancreas.

The protein localises to the membrane. It catalyses the reaction K(+)(in) = K(+)(out). With respect to regulation, activated by phosphatidylinositol 4,5 biphosphate (PtdIns(4,5)P2). Functionally, inward rectifier potassium channels are characterized by a greater tendency to allow potassium to flow into the cell rather than out of it. Their voltage dependence is regulated by the concentration of extracellular potassium; as external potassium is raised, the voltage range of the channel opening shifts to more positive voltages. The inward rectification is mainly due to the blockage of outward current by internal magnesium. This potassium channel may be involved in the regulation of insulin secretion by glucose and/or neurotransmitters acting through G-protein-coupled receptors. The polypeptide is G protein-activated inward rectifier potassium channel 2 (KCNJ6) (Homo sapiens (Human)).